A 338-amino-acid polypeptide reads, in one-letter code: Clathrin light chain 1 (338 aa).

The interval 1–111 is disordered; it reads MATFDDGDFP…NEMREEGFQR (111 aa). Composition is skewed to polar residues over residues 29-47 and 61-73; these read SEAQQPPTQHQSGGFSSFN and SSPNHDFSSPFES. A compositionally biased stretch (basic and acidic residues) spans 102–111; sequence NEMREEGFQR. The interval 102 to 163 is involved in binding clathrin heavy chain; it reads NEMREEGFQR…TIETNKTDNR (62 aa). A coiled-coil region spans residues 122-142; the sequence is LEEKEKKEKEMRNQIITEAED. The disordered stretch occupies residues 192–338; that stretch reads IPREVPNIEK…VTEAEGTKAE (147 aa). A compositionally biased stretch (basic and acidic residues) spans 197-212; the sequence is PNIEKKRGKKDPDKKP. Residues 241–253 show a composition bias toward pro residues; the sequence is NPPPHMMPPPPPA. The span at 254–304 shows a compositional bias: basic and acidic residues; that stretch reads KDAKDGKDAKDGKDAKTGKDGKDAKGGKDAKDLKDGKPADPKVTEEKRPSP.

It belongs to the clathrin light chain family. In terms of assembly, clathrin coats are formed from molecules containing 3 heavy chains and 3 light chains.

The protein localises to the cytoplasmic vesicle membrane. Its subcellular location is the membrane. The protein resides in the coated pit. Its function is as follows. Clathrin is the major protein of the polyhedral coat of coated pits and vesicles. The sequence is that of Clathrin light chain 1 from Arabidopsis thaliana (Mouse-ear cress).